Reading from the N-terminus, the 60-residue chain is MLILTRKVGESLLIGDDISITILNIRGNQVKIGVEAPKEVSVHREEIYHRIRDVKDEQQL.

It belongs to the CsrA/RsmA family. As to quaternary structure, homodimer; the beta-strands of each monomer intercalate to form a hydrophobic core, while the alpha-helices form wings that extend away from the core.

It localises to the cytoplasm. Functionally, a key translational regulator that binds mRNA to regulate translation initiation and/or mRNA stability. Mediates global changes in gene expression, shifting from rapid growth to stress survival by linking envelope stress, the stringent response and the catabolite repression systems. Usually binds in the 5'-UTR; binding at or near the Shine-Dalgarno sequence prevents ribosome-binding, repressing translation, binding elsewhere in the 5'-UTR can activate translation and/or stabilize the mRNA. Its function is antagonized by small RNA(s). The chain is Translational regulator CsrA from Histophilus somni (strain 2336) (Haemophilus somnus).